We begin with the raw amino-acid sequence, 482 residues long: tRNA sulfurtransferase (482 aa).

Residues 61–165 (LAIRDALTRI…DDRLLLIKGR (105 aa)) form the THUMP domain. ATP is bound by residues 183 to 184 (LI), Lys-265, Gly-287, and Gln-296. Cys-344 and Cys-456 are disulfide-bonded. Positions 404–482 (FGANDVILDI…GFANVKVYRP (79 aa)) constitute a Rhodanese domain. Catalysis depends on Cys-456, which acts as the Cysteine persulfide intermediate.

The protein belongs to the ThiI family.

It localises to the cytoplasm. It catalyses the reaction [ThiI sulfur-carrier protein]-S-sulfanyl-L-cysteine + a uridine in tRNA + 2 reduced [2Fe-2S]-[ferredoxin] + ATP + H(+) = [ThiI sulfur-carrier protein]-L-cysteine + a 4-thiouridine in tRNA + 2 oxidized [2Fe-2S]-[ferredoxin] + AMP + diphosphate. The enzyme catalyses [ThiS sulfur-carrier protein]-C-terminal Gly-Gly-AMP + S-sulfanyl-L-cysteinyl-[cysteine desulfurase] + AH2 = [ThiS sulfur-carrier protein]-C-terminal-Gly-aminoethanethioate + L-cysteinyl-[cysteine desulfurase] + A + AMP + 2 H(+). Its pathway is cofactor biosynthesis; thiamine diphosphate biosynthesis. Its function is as follows. Catalyzes the ATP-dependent transfer of a sulfur to tRNA to produce 4-thiouridine in position 8 of tRNAs, which functions as a near-UV photosensor. Also catalyzes the transfer of sulfur to the sulfur carrier protein ThiS, forming ThiS-thiocarboxylate. This is a step in the synthesis of thiazole, in the thiamine biosynthesis pathway. The sulfur is donated as persulfide by IscS. In Salmonella agona (strain SL483), this protein is tRNA sulfurtransferase.